Consider the following 489-residue polypeptide: Pre-glycoprotein polyprotein GP complex (489 aa).

A lipid anchor (N-myristoyl glycine; by host) is attached at Gly-2. Topologically, residues 2 to 17 (GQIVTFFQEVPHILEE) are extracellular. The chain crosses the membrane as a helical span at residues 18–33 (VMNIVLMTLSILAILK). The Cytoplasmic segment spans residues 34–58 (GIYNVMTCGIIGLITFLFLCGRSCS). Residue Cys-57 participates in Zn(2+) binding. Over 59-430 (SIYKDNYEFF…QSTTPLGLVD (372 aa)) the chain is Extracellular. Residues Asn-78, Asn-88, Asn-98, Asn-108, Asn-118, and Asn-166 are each glycosylated (N-linked (GlcNAc...) asparagine; by host). 6 cysteine pairs are disulfide-bonded: Cys-85-Cys-229, Cys-117-Cys-154, Cys-179-Cys-210, Cys-277-Cys-290, Cys-299-Cys-308, and Cys-362-Cys-383. Asn-222 is a glycosylation site (N-linked (GlcNAc...) asparagine; by host). 4 N-linked (GlcNAc...) asparagine; by host glycosylation sites follow: Asn-363, Asn-371, Asn-388, and Asn-393. A helical transmembrane segment spans residues 431–451 (LFVFSTSFYLISVFLHLIKIP). The Cytoplasmic portion of the chain corresponds to 452–489 (THRHIKGKPCPKPHRLNHMAICSCGFYKQPGLPTQWKR). His-453, His-455, Cys-461, His-465, Cys-473, and Cys-475 together coordinate Zn(2+).

This sequence belongs to the arenaviridae GPC protein family. As to quaternary structure, interacts with glycoprotein G2. Part of the GP complex (GP-C) together with glycoprotein G1 and glycoprotein G2. The GP-complex interacts with protein Z, which interacts with ribonucleocapsid; these interactions may induce virion budding. In terms of assembly, homotrimer; disulfide-linked. In pre-fusion state, G1 homotrimers bind G2 homotrimers via ionic interactions. Part of the GP complex (GP-C) together with glycoprotein G2 and the stable signal peptide. The GP-complex interacts with protein Z, which interacts with ribonucleocapsid; these interactions may induce virion budding. Homotrimer. Interacts with the stable signal peptide. In pre-fusion state, G2 homotrimers bind G1 homotrimers via ionic interactions. Part of the GP complex (GP-C) together with glycoprotein G1 and the stable signal peptide. Acidification in the endosome triggers rearrangements, which ultimately leads to a 6 helix bundle formed by the two heptad repeat domains (HR1 and HR2) in post-fusion state. The GP-complex interacts with protein Z, which interacts with ribonucleocapsid; these interactions may induce virion budding. In terms of processing, specific enzymatic cleavages in vivo yield mature proteins. GP-C polyprotein is cleaved in the endoplasmic reticulum by the host protease MBTPS1. Only cleaved glycoprotein is incorporated into virions. The SSP remains stably associated with the GP complex following cleavage by signal peptidase and plays crucial roles in the trafficking of GP through the secretory pathway. Post-translationally, myristoylation is necessary for GP2-mediated fusion activity.

The protein localises to the virion membrane. It is found in the host endoplasmic reticulum membrane. The protein resides in the host Golgi apparatus membrane. Its subcellular location is the host cell membrane. Functionally, functions as a cleaved signal peptide that is retained as the third component of the GP complex (GP-C). Helps to stabilize the spike complex in its native conformation. The SSP is required for efficient glycoprotein expression, post-translational maturation cleavage of G1 and G2, glycoprotein transport to the cell surface plasma membrane, formation of infectious virus particles, and acid pH-dependent glycoprotein-mediated cell fusion. In terms of biological role, forms the virion spikes together with glycoprotein G2. The glycoprotein spike trimers are connected to the underlying matrix. Interacts with the host receptor leading to virus endocytosis. Its function is as follows. Forms the virion spikes together with glycoprotein G1. The glycoprotein spike trimers are connected to the underlying matrix. Class I viral fusion protein that directs fusion of viral and host endosomal membranes, leading to delivery of the nucleocapsid into the cytoplasm. Membrane fusion is mediated by irreversible conformational changes induced by acidification. The sequence is that of Pre-glycoprotein polyprotein GP complex from Mastomys natalensis (African soft-furred rat).